Consider the following 524-residue polypeptide: MDITNRQAVLKNFLGNSPDWYKLAIMGFLIINPLVFFFVSPFVAGWMLVIEFIFTLAMALKCYPLQPGGLLAIQAVAIGMTSPHQVAEEIANNLEVLLLLVFMVAGIYFMKQLLLFVFTKLLLNIRSKTILSLAFCLASAFLSAFLDALTVIAVVISVSVGFYTIYHNVTSNHSDKDITDDSGIDNQDSHETLEQFRAFLRSLMMHAGVGTALGGVMTMVGEPQNLIIAKSAGWNFADFFIRMLPVTLPVFICGLLVCLLVEKFKLFGYGAQLPERVRQVLTEYDQQASAKRTKQEKMKLIVQAIIGVWLVLALALHLAEVGLVGLSVIILATSFCGITNEHSLGKAFQEALPFTALLTVFFAVVAVIIEQSLFTPIIQFVLQASPSAQLSLFYLFNGLLSSVSDNVFVGTVYINEARSAFEHGIVSLQQFELLAVAINTGTNLPSVATPNGQAAFLFLLTSALAPLIRLSYGRMVYMALPYTLVMTIVGLLGVEFLLVPMTEWLTQAGWISLPHITNGVAIPH.

Transmembrane regions (helical) follow at residues 13–33 (FLGN…IINP), 98–118 (LLLV…LFVF), 140–160 (AFLS…SVSV), 239–259 (FFIR…LVCL), 304–324 (AIIG…VGLV), 325–345 (GLSV…HSLG), 358–378 (LTVF…TPII), 448–468 (ATPN…APLI), and 479–499 (ALPY…FLLV).

The protein belongs to the NhaB Na(+)/H(+) (TC 2.A.34) antiporter family.

The protein resides in the cell inner membrane. The enzyme catalyses 2 Na(+)(in) + 3 H(+)(out) = 2 Na(+)(out) + 3 H(+)(in). Functionally, na(+)/H(+) antiporter that extrudes sodium in exchange for external protons. The protein is Na(+)/H(+) antiporter NhaB of Yersinia pseudotuberculosis serotype O:3 (strain YPIII).